Reading from the N-terminus, the 188-residue chain is MSYLVVTIKVILITGMPGSGKSEFAKLLKERGAKVIVMSDVVRKRYSIEAKPGERLMDFAKRLREIYGDGVVARLCVEELGTSNHDLVVFDGVRSLAEVEEFKRLLGDSVYIVAVHSPPKIRYKRMIERLRSDDSKEISELIRRDREELKLGIGEVIAMADYIITNDSNYEEFKRRCEEVTDRVLKNG.

Position 15 to 22 (15 to 22 (GMPGSGKS)) interacts with ATP.

It belongs to the UPF0200 family.

This chain is UPF0200 protein M1627_1244, found in Saccharolobus islandicus (strain M.16.27) (Sulfolobus islandicus).